The sequence spans 435 residues: Hyaluronidase-1 (435 aa).

Positions 1–21 (MAAHLLPICTLFLNLLSVAQG) are cleaved as a signal peptide. 2 cysteine pairs are disulfide-bonded: Cys43/Cys333 and Cys207/Cys221. 4 N-linked (GlcNAc...) asparagine glycosylation sites follow: Asn70, Asn99, Asn107, and Asn121. Residue Glu131 is the Proton donor of the active site. N-linked (GlcNAc...) asparagine glycans are attached at residues Asn216, Asn256, and Asn350. 3 disulfides stabilise this stretch: Cys358–Cys369, Cys363–Cys418, and Cys420–Cys429. The 12-residue stretch at 418 to 429 (CRCYPGWRGTWC) folds into the EGF-like domain.

Belongs to the glycosyl hydrolase 56 family. Highly expressed in spleen, kidney, and lung.

The protein localises to the secreted. It localises to the lysosome. It catalyses the reaction Random hydrolysis of (1-&gt;4)-linkages between N-acetyl-beta-D-glucosamine and D-glucuronate residues in hyaluronate.. Its function is as follows. May have a role in promoting tumor progression. May block the TGFB1-enhanced cell growth. This Sus scrofa (Pig) protein is Hyaluronidase-1 (HYAL1).